Consider the following 279-residue polypeptide: uncharacterized protein (279 aa).

This sequence belongs to the peptidase C59 family.

This is an uncharacterized protein from Chlorella (PBCV-1).